The primary structure comprises 208 residues: Proheparin-binding EGF-like growth factor (208 aa).

Positions 1–19 (MKLLPSVVLKLLLAAVLSA) are cleaved as a signal peptide. A propeptide spanning residues 20 to 62 (LVTGESLEQLRRGLAAGTSNPDPSTGSTDQLLRLGGGRDRKVR) is cleaved from the precursor. Over 20-160 (LVTGESLEQL…ENRLYTYDHT (141 aa)) the chain is Extracellular. Residues 34–55 (AAGTSNPDPSTGSTDQLLRLGG) are disordered. Residues 36–49 (GTSNPDPSTGSTDQ) show a composition bias toward polar residues. O-linked (GalNAc...) threonine glycans are attached at residues T75 and T85. A disordered region spans residues 81–104 (QALATPSKEEHGKRKKKGKGLGKK). Over residues 93–102 (KRKKKGKGLG) the composition is skewed to basic residues. The region spanning 104–144 (KRDPCLRKYKDFCIHGECKYVKELRAPSCICHPGYHGERCH) is the EGF-like domain. 3 cysteine pairs are disulfide-bonded: C108–C121, C116–C132, and C134–C143. The interval 136–148 (PGYHGERCHGLSL) is toxin-binding domain. Positions 149 to 208 (PVENRLYTYDHTTILAVVAVVLSSVCLLVIVGLLMFRYHRRGGYDVENEEKVKLGMTNSH) are cleaved as a propeptide — C-terminal. Residues 161 to 184 (TILAVVAVVLSSVCLLVIVGLLMF) traverse the membrane as a helical segment. Topologically, residues 185–208 (RYHRRGGYDVENEEKVKLGMTNSH) are cytoplasmic.

In terms of assembly, interacts with EGFR and ERBB4. Interacts with FBLN1. In terms of processing, O-glycosylated.

The protein localises to the secreted. The protein resides in the extracellular space. Its subcellular location is the cell membrane. Growth factor that mediates its effects via EGFR, ERBB2 and ERBB4. Required for normal cardiac valve formation and normal heart function. Promotes smooth muscle cell proliferation. May be involved in macrophage-mediated cellular proliferation. It is mitogenic for fibroblasts, but not endothelial cells. It is able to bind EGF receptor/EGFR with higher affinity than EGF itself and is a far more potent mitogen for smooth muscle cells than EGF. Also acts as a diphtheria toxin receptor. This chain is Proheparin-binding EGF-like growth factor (HBEGF), found in Chlorocebus aethiops (Green monkey).